We begin with the raw amino-acid sequence, 140 residues long: Relaxin-3 (140 aa).

An N-terminal signal peptide occupies residues 1-26 (MAKRPLLLLLLAVWVLAGELWLRTEA). 3 disulfides stabilise this stretch: Cys-36–Cys-127, Cys-48–Cys-140, and Cys-126–Cys-131. A propeptide spans 56-116 (SDMLAHEALG…RTPGALRGSR (61 aa)) (connecting peptide).

Belongs to the insulin family. In terms of assembly, heterodimer of a B chain and an A chain linked by two disulfide bonds.

It localises to the secreted. May play a role in neuropeptide signaling processes. Ligand for LGR7, RXFP3 and RXFP4. This chain is Relaxin-3 (RLN3), found in Sus scrofa (Pig).